Here is a 62-residue protein sequence, read N- to C-terminus: MLVLTRKVGESLLIGDDIEITVLSVRGNQVKLGVNAPKNIVVHREEIYHQIKALADNIPESV.

This sequence belongs to the CsrA/RsmA family. In terms of assembly, homodimer; the beta-strands of each monomer intercalate to form a hydrophobic core, while the alpha-helices form wings that extend away from the core.

The protein localises to the cytoplasm. Functionally, a key translational regulator that binds mRNA to regulate translation initiation and/or mRNA stability. Mediates global changes in gene expression, shifting from rapid growth to stress survival by linking envelope stress, the stringent response and the catabolite repression systems. Usually binds in the 5'-UTR; binding at or near the Shine-Dalgarno sequence prevents ribosome-binding, repressing translation, binding elsewhere in the 5'-UTR can activate translation and/or stabilize the mRNA. Its function is antagonized by small RNA(s). This chain is Translational regulator CsrA, found in Haemophilus ducreyi (strain 35000HP / ATCC 700724).